We begin with the raw amino-acid sequence, 440 residues long: Guanine/hypoxanthine permease PbuG (440 aa).

The next 13 helical transmembrane spans lie at I18 to T38, A57 to A77, I81 to M101, A107 to F127, A142 to I162, I175 to V195, G201 to V221, M251 to V271, A291 to T311, G327 to L347, V354 to A374, M388 to Y408, and K419 to L439.

Belongs to the nucleobase:cation symporter-2 (NCS2) (TC 2.A.40) family. Azg-like subfamily.

The protein resides in the cell membrane. Involved in the uptake of the purine bases hypoxanthine and guanine. In Bacillus subtilis (strain 168), this protein is Guanine/hypoxanthine permease PbuG (pbuG).